Consider the following 235-residue polypeptide: UDP-2,3-diacylglucosamine hydrolase (235 aa).

5 residues coordinate Mn(2+): Asp-9, His-11, Asp-42, Asn-80, and His-115. 80 to 81 is a binding site for substrate; sequence NR. Substrate-binding residues include Asp-123, Ser-161, Lys-165, Lys-168, and His-196. Residues His-196 and His-198 each coordinate Mn(2+).

Belongs to the LpxH family. Requires Mn(2+) as cofactor.

It localises to the cell inner membrane. The enzyme catalyses UDP-2-N,3-O-bis[(3R)-3-hydroxytetradecanoyl]-alpha-D-glucosamine + H2O = 2-N,3-O-bis[(3R)-3-hydroxytetradecanoyl]-alpha-D-glucosaminyl 1-phosphate + UMP + 2 H(+). Its pathway is glycolipid biosynthesis; lipid IV(A) biosynthesis; lipid IV(A) from (3R)-3-hydroxytetradecanoyl-[acyl-carrier-protein] and UDP-N-acetyl-alpha-D-glucosamine: step 4/6. Its function is as follows. Hydrolyzes the pyrophosphate bond of UDP-2,3-diacylglucosamine to yield 2,3-diacylglucosamine 1-phosphate (lipid X) and UMP by catalyzing the attack of water at the alpha-P atom. Involved in the biosynthesis of lipid A, a phosphorylated glycolipid that anchors the lipopolysaccharide to the outer membrane of the cell. The polypeptide is UDP-2,3-diacylglucosamine hydrolase (Actinobacillus succinogenes (strain ATCC 55618 / DSM 22257 / CCUG 43843 / 130Z)).